Consider the following 621-residue polypeptide: Exonuclease 3'-5' domain-containing protein 2 (621 aa).

The Mitochondrial intermembrane portion of the chain corresponds to 1–4 (MSRQ). The helical transmembrane segment at 5 to 25 (NLVALTVTTLLGVAVGGFVLW) threads the bilayer. The Cytoplasmic portion of the chain corresponds to 26-621 (KGIQRRRRSK…FGEDLPIQLS (596 aa)). The tract at residues 34–68 (SKTSPVTQQPQQKVLGSRELPPPEDDQLHSSAPRS) is disordered. A compositionally biased stretch (polar residues) spans 36 to 47 (TSPVTQQPQQKV). A divalent metal cation contacts are provided by aspartate 108, glutamate 110, and aspartate 246. In terms of domain architecture, 3'-5' exonuclease spans 155–247 (ILADGTILKV…DQVIYAARDA (93 aa)). The interval 299–343 (RLGEEVNGEATESQQKPRNKKSKMDGMVPGNHQGRDPRKHKRKPL) is disordered.

This sequence belongs to the EXD2 family. As to quaternary structure, homodimer. Interacts with RBBP8, MRE11 and BRCA1. Mg(2+) is required as a cofactor. It depends on Mn(2+) as a cofactor.

The protein resides in the mitochondrion outer membrane. It is found in the mitochondrion matrix. Its subcellular location is the nucleus. It localises to the chromosome. The catalysed reaction is Exonucleolytic cleavage in the 3'- to 5'-direction to yield nucleoside 5'-phosphates.. Functionally, exonuclease that has both 3'-5' exoribonuclease and exodeoxyribonuclease activities, depending on the divalent metal cation used as cofactor. In presence of Mg(2+), only shows 3'-5' exoribonuclease activity, while it shows both exoribonuclease and exodeoxyribonuclease activities in presence of Mn(2+). Acts as an exoribonuclease in mitochondrion, possibly by regulating ATP production and mitochondrial translation. Also involved in the response to DNA damage. Acts as 3'-5' exodeoxyribonuclease for double-strand breaks resection and efficient homologous recombination. Plays a key role in controlling the initial steps of chromosomal break repair, it is recruited to chromatin in a damage-dependent manner and functionally interacts with the MRN complex to accelerate resection through its 3'-5' exonuclease activity, which efficiently processes double-stranded DNA substrates containing nicks. Also involved in response to replicative stress: recruited to stalled forks and is required to stabilize and restart stalled replication forks by restraining excessive fork regression, thereby suppressing their degradation. The sequence is that of Exonuclease 3'-5' domain-containing protein 2 from Homo sapiens (Human).